The following is a 325-amino-acid chain: RepFIB replication protein A (325 aa).

The tract at residues alanine 279–serine 298 is disordered.

It belongs to the initiator RepB protein family.

Its function is as follows. This protein is essential for plasmid replication; it is involved in copy control functions. In vitro, binds to the DNA repeat units, BCDD'D'', EFG and HIJ. This is RepFIB replication protein A (repA) from Escherichia coli.